Consider the following 181-residue polypeptide: ATP-dependent protease subunit HslV (181 aa).

Threonine 6 is a catalytic residue. Na(+) is bound by residues alanine 162, cysteine 165, and threonine 168.

Belongs to the peptidase T1B family. HslV subfamily. A double ring-shaped homohexamer of HslV is capped on each side by a ring-shaped HslU homohexamer. The assembly of the HslU/HslV complex is dependent on binding of ATP.

Its subcellular location is the cytoplasm. The catalysed reaction is ATP-dependent cleavage of peptide bonds with broad specificity.. With respect to regulation, allosterically activated by HslU binding. Its function is as follows. Protease subunit of a proteasome-like degradation complex believed to be a general protein degrading machinery. The sequence is that of ATP-dependent protease subunit HslV from Solidesulfovibrio magneticus (strain ATCC 700980 / DSM 13731 / RS-1) (Desulfovibrio magneticus).